Consider the following 926-residue polypeptide: Up-regulator of cell proliferation (926 aa).

Position 3 is a phosphoserine (Ser-3). Residues 689–924 form the VLIG-type G domain; sequence RSRLVVLSAL…NIQQLIELLR (236 aa).

This sequence belongs to the TRAFAC class dynamin-like GTPase superfamily. Very large inducible GTPase (VLIG) family.

It localises to the cytoplasm. The protein resides in the nucleus. Its function is as follows. May be involved in cell cycle progression through the regulation of cyclin D1 expression. This Mus musculus (Mouse) protein is Up-regulator of cell proliferation (Urgcp).